The sequence spans 1020 residues: Contactin-1 (1020 aa).

The signal sequence occupies residues 1–20 (MKMPLLVSHLLLISLTSCLG). Ig-like C2-type domains follow at residues 41 to 131 (PIFE…ATLS), 137 to 223 (PFPP…KSVF), 241 to 326 (PADI…ARIY), 331 to 407 (PEWV…AELK), 413 to 500 (PTFE…GTLV), and 504 to 603 (PTRI…LVVR). 2 disulfide bridges follow: Cys65/Cys114 and Cys158/Cys211. N-linked (GlcNAc...) asparagine glycosylation is found at Asn208 and Asn258. Residues Cys263 and Cys310 are joined by a disulfide bond. N-linked (GlcNAc...) asparagine glycosylation occurs at Asn338. Disulfide bonds link Cys352–Cys391 and Cys436–Cys484. Residues Asn457, Asn473, Asn494, and Asn521 are each glycosylated (N-linked (GlcNAc...) asparagine). An intrachain disulfide couples Cys526 to Cys585. N-linked (GlcNAc...) asparagine glycosylation is present at Asn593. Fibronectin type-III domains lie at 608 to 706 (PPGG…TDGA), 711 to 808 (APSD…SAQD), 813 to 908 (APTE…APPS), and 909 to 1002 (QPPR…TLSS). Residues 695-719 (SIPSNRIKTDGAAPNVAPSDVGGGG) form a disordered region. A glycan (N-linked (GlcNAc...) asparagine) is linked at Asn935. Residue Ser1001 is the site of GPI-anchor amidated serine attachment. The propeptide at 1002-1020 (SSLLSLLLPSLGFLVYSEF) is removed in mature form.

This sequence belongs to the immunoglobulin superfamily. Contactin family. As to quaternary structure, monomer. Interacts with CNTNAP1 in cis form. Binds to the carbonic-anhydrase like domain of PTPRZ1. Interacts with NOTCH1 and TNR. Detected in a complex with NRCAM and PTPRB. Interacts with TASOR. As to expression, expressed in the ovary and in Sertoli cells of the testis.

Its subcellular location is the cell membrane. Its function is as follows. Contactins mediate cell surface interactions during nervous system development. Involved in the formation of paranodal axo-glial junctions in myelinated peripheral nerves and in the signaling between axons and myelinating glial cells via its association with CNTNAP1. Participates in oligodendrocytes generation by acting as a ligand of NOTCH1. Its association with NOTCH1 promotes NOTCH1 activation through the released notch intracellular domain (NICD) and subsequent translocation to the nucleus. Interaction with TNR induces a repulsion of neurons and an inhibition of neurite outgrowth. The sequence is that of Contactin-1 (Cntn1) from Mus musculus (Mouse).